We begin with the raw amino-acid sequence, 481 residues long: 3-isopropylmalate dehydratase large subunit (481 aa).

Positions 357, 417, and 420 each coordinate [4Fe-4S] cluster.

The protein belongs to the aconitase/IPM isomerase family. LeuC type 1 subfamily. As to quaternary structure, heterodimer of LeuC and LeuD. [4Fe-4S] cluster serves as cofactor.

The catalysed reaction is (2R,3S)-3-isopropylmalate = (2S)-2-isopropylmalate. It participates in amino-acid biosynthesis; L-leucine biosynthesis; L-leucine from 3-methyl-2-oxobutanoate: step 2/4. In terms of biological role, catalyzes the isomerization between 2-isopropylmalate and 3-isopropylmalate, via the formation of 2-isopropylmaleate. This chain is 3-isopropylmalate dehydratase large subunit, found in Maricaulis maris (strain MCS10) (Caulobacter maris).